The following is a 330-amino-acid chain: Phosphate acyltransferase (330 aa).

It belongs to the PlsX family. As to quaternary structure, homodimer. Probably interacts with PlsY.

It is found in the cytoplasm. The enzyme catalyses a fatty acyl-[ACP] + phosphate = an acyl phosphate + holo-[ACP]. It functions in the pathway lipid metabolism; phospholipid metabolism. In terms of biological role, catalyzes the reversible formation of acyl-phosphate (acyl-PO(4)) from acyl-[acyl-carrier-protein] (acyl-ACP). This enzyme utilizes acyl-ACP as fatty acyl donor, but not acyl-CoA. In Teredinibacter turnerae (strain ATCC 39867 / T7901), this protein is Phosphate acyltransferase.